A 141-amino-acid chain; its full sequence is MTLEQTLAIIKPDAVERNLIGNIISRLEDKGFQIIAMKMLHLNQEQAEGFYAEHRNKAFFTELVKYMTSAPIVVLVLQKENAVKDYRTFMGTTNPEIAENGTLRYEFAINQTQNSVHGSDSLENAQREIAYFFAEAEIYAR.

6 residues coordinate ATP: K11, F59, R87, T93, R104, and N114. Catalysis depends on H117, which acts as the Pros-phosphohistidine intermediate.

The protein belongs to the NDK family. Homotetramer. Mg(2+) is required as a cofactor.

It localises to the cytoplasm. The catalysed reaction is a 2'-deoxyribonucleoside 5'-diphosphate + ATP = a 2'-deoxyribonucleoside 5'-triphosphate + ADP. It carries out the reaction a ribonucleoside 5'-diphosphate + ATP = a ribonucleoside 5'-triphosphate + ADP. In terms of biological role, major role in the synthesis of nucleoside triphosphates other than ATP. The ATP gamma phosphate is transferred to the NDP beta phosphate via a ping-pong mechanism, using a phosphorylated active-site intermediate. This chain is Nucleoside diphosphate kinase, found in Histophilus somni (strain 2336) (Haemophilus somnus).